The primary structure comprises 259 residues: Protoheme IX farnesyltransferase (259 aa).

The next 8 membrane-spanning stretches (helical) occupy residues 15–35, 61–81, 83–103, 109–129, 137–157, 182–202, 208–228, and 236–256; these read LICLTALLLAAAAAAMINGVL, ATVAAAGMLFAALALSITFLP, LTTALILLAIFSYTPLYTLWF, WGVVPGGIPGALPVLVGASAV, PLILFLVMLLWQPPHFWALAL, VCIFVFAALLLPASLALWFTG, FAIEALCLGFFNLFSCYLYLV, and AFQASIFYLLGLLSAVIIDIC.

Belongs to the UbiA prenyltransferase family. Protoheme IX farnesyltransferase subfamily.

Its subcellular location is the cell inner membrane. The enzyme catalyses heme b + (2E,6E)-farnesyl diphosphate + H2O = Fe(II)-heme o + diphosphate. It participates in porphyrin-containing compound metabolism; heme O biosynthesis; heme O from protoheme: step 1/1. In terms of biological role, converts heme B (protoheme IX) to heme O by substitution of the vinyl group on carbon 2 of heme B porphyrin ring with a hydroxyethyl farnesyl side group. The protein is Protoheme IX farnesyltransferase of Geotalea uraniireducens (strain Rf4) (Geobacter uraniireducens).